The sequence spans 527 residues: Acid-sensing ion channel 1 (527 aa).

Residues 1–49 are Cytoplasmic-facing; it reads MMDLKVDEEEVDSGQPVSIQAFASSSTLHGISHIFSYERLSLKRVVWAL. A helical transmembrane segment spans residues 50–71; it reads CFMGSLALLALVCTNRIQYYFL. Topologically, residues 72 to 424 are extracellular; the sequence is YPHVTKLDEV…NYETIEQKKA (353 aa). 7 cysteine pairs are disulfide-bonded: Cys94-Cys195, Cys173-Cys180, Cys291-Cys366, Cys309-Cys362, Cys313-Cys360, Cys322-Cys344, and Cys324-Cys336. N-linked (GlcNAc...) asparagine glycosylation is found at Asn367 and Asn394. The chain crosses the membrane as a discontinuously helical span at residues 425–454; it reads YEVAGLLGDIGGQMGLFIGASILTVLELFD. The GAS motif; ion selectivity filter signature appears at 443-445; the sequence is GAS. At 455–527 the chain is on the cytoplasmic side; sequence YAYEVIKHRL…ARGTFEDFTC (73 aa).

This sequence belongs to the amiloride-sensitive sodium channel (TC 1.A.6) family. ASIC1 subfamily. As to quaternary structure, homotrimer. Heterotrimer; with other ASIC proteins producing channel with different properties.

The protein resides in the cell membrane. Its subcellular location is the postsynaptic cell membrane. The protein localises to the cell projection. It localises to the dendrite. It catalyses the reaction Na(+)(in) = Na(+)(out). It carries out the reaction Li(+)(in) = Li(+)(out). The catalysed reaction is K(+)(in) = K(+)(out). The enzyme catalyses Ca(2+)(in) = Ca(2+)(out). Inhibited by the diuretic drug amiloride. Inhibited by Cs(1+) ions. Inhibited by the spider venom psalmotoxin-1; this locks the channel into its desensitized conformation. Channel activity is increased by the heterodimeric snake venom neurotoxin composed of MitTx-alpha and MitTx-beta; this slows channel closure and increases the magnitude of the steady-state current that is triggered by low pH. In terms of biological role, forms voltage-independent, pH-gated trimeric sodium channels that act as postsynaptic excitatory receptors in the nervous system, playing a crucial role in regulating synaptic plasticity, learning, and memory. Upon extracellular pH drop this channel elicits transient, fast activating, and completely desensitizing inward currents. Displays high selectivity for sodium ions but can also permit the permeation of other cations. Regulates more or less directly intracellular calcium concentration and CaMKII phosphorylation, and thereby the density of dendritic spines. Modulates neuronal activity in the circuits underlying innate fear. The chain is Acid-sensing ion channel 1 from Gallus gallus (Chicken).